Here is a 317-residue protein sequence, read N- to C-terminus: Methionyl-tRNA formyltransferase (317 aa).

Residue 110 to 113 participates in (6S)-5,6,7,8-tetrahydrofolate binding; it reads SLLP.

It belongs to the Fmt family.

It carries out the reaction L-methionyl-tRNA(fMet) + (6R)-10-formyltetrahydrofolate = N-formyl-L-methionyl-tRNA(fMet) + (6S)-5,6,7,8-tetrahydrofolate + H(+). In terms of biological role, attaches a formyl group to the free amino group of methionyl-tRNA(fMet). The formyl group appears to play a dual role in the initiator identity of N-formylmethionyl-tRNA by promoting its recognition by IF2 and preventing the misappropriation of this tRNA by the elongation apparatus. The chain is Methionyl-tRNA formyltransferase from Lactiplantibacillus plantarum (strain ATCC BAA-793 / NCIMB 8826 / WCFS1) (Lactobacillus plantarum).